We begin with the raw amino-acid sequence, 86 residues long: U2-sicaritoxin-Li1b (86 aa).

The N-terminal stretch at M1 to A20 is a signal peptide. The propeptide occupies E21–R33. 4 disulfides stabilise this stretch: C35/C53, C42/C62, C52/C71, and C64/C69. K85 bears the Lysine amide mark.

Belongs to the neurotoxin 39 family. Expressed by the venom gland.

The protein resides in the secreted. Functionally, toxin active against S.frugiperda larvae. May act on sodium channels (Nav). The sequence is that of U2-sicaritoxin-Li1b from Loxosceles intermedia (Brown spider).